A 433-amino-acid chain; its full sequence is O-methyltransferase VdtC (433 aa).

Asp284 provides a ligand contact to S-adenosyl-L-methionine. Residue His335 is the Proton acceptor of the active site.

It belongs to the class I-like SAM-binding methyltransferase superfamily. Cation-independent O-methyltransferase family. COMT subfamily.

The catalysed reaction is 7,9,10-trihydroxy-3-(2-oxopropyl)-1H-benzo[g]isochromen-1-one + S-adenosyl-L-methionine = 9,10-dihydroxy-7-methoxy-3-(2-oxopropyl)-1H-benzo[g]isochromen-1-one + S-adenosyl-L-homocysteine + H(+). The protein operates within secondary metabolite biosynthesis. O-methyltransferase; part of the gene cluster that mediates the biosynthesis of viriditoxin, one of the 'classical' secondary metabolites produced by fungi and that has antibacterial activity. The first step is performed by the polyketide synthase VdtA which condenses one acetyl-CoA and 6 malonyl-CoA units to form the heptaketide monomer backbone of viriditoxin. The product of VdtA is then O-methylated on C7 by the O-methyltransferase VdtC. The O-methyl group is important for the stereoselective coupling of the monomers at the final step of viriditoxin biosynthesis. The short-chain dehydrogenase/reductase VdtF then acts as a stereospecific reductase converting the pyrone to dihydropyrone via the reduction of the C3-C4 double bond. The FAD-binding monooxygenase VdtE then converts the ketone group into a methyl-ester group to yield semi-viriditoxin. Finally, the laccase VdtB is involved in dimerization of 2 semi-viriditoxin molecules to yield the final viriditoxin. VdtB is responsible for the regioselective 6,6'-coupling of semi-viriditoxin, which yields (M)-viriditoxin and (P)-viriditoxin at a ratio of 1:2. The non-catalytic carboxylesterase-like protein VdtD affects the stereochemistical outcome of the coupling. The highly reducing polyketide synthase VdtX is not involved in viriditoxin synthesis, but might possibly play a role in the production of additional metabolites not identified yet. This is O-methyltransferase VdtC from Byssochlamys spectabilis (Paecilomyces variotii).